Reading from the N-terminus, the 204-residue chain is Peptide deformylase (204 aa).

Residues cysteine 131 and histidine 174 each contribute to the Fe cation site. Residue glutamate 175 is part of the active site. Histidine 178 lines the Fe cation pocket.

This sequence belongs to the polypeptide deformylase family. Fe(2+) is required as a cofactor.

It carries out the reaction N-terminal N-formyl-L-methionyl-[peptide] + H2O = N-terminal L-methionyl-[peptide] + formate. Functionally, removes the formyl group from the N-terminal Met of newly synthesized proteins. Requires at least a dipeptide for an efficient rate of reaction. N-terminal L-methionine is a prerequisite for activity but the enzyme has broad specificity at other positions. The protein is Peptide deformylase of Streptococcus gordonii (strain Challis / ATCC 35105 / BCRC 15272 / CH1 / DL1 / V288).